The chain runs to 418 residues: Glutamyl-tRNA reductase (418 aa).

Substrate contacts are provided by residues 49-52, Ser109, 114-116, and Gln120; these read TCNR and EPQ. Cys50 functions as the Nucleophile in the catalytic mechanism. 189–194 lines the NADP(+) pocket; it reads GAGETI.

The protein belongs to the glutamyl-tRNA reductase family. Homodimer.

It catalyses the reaction (S)-4-amino-5-oxopentanoate + tRNA(Glu) + NADP(+) = L-glutamyl-tRNA(Glu) + NADPH + H(+). Its pathway is porphyrin-containing compound metabolism; protoporphyrin-IX biosynthesis; 5-aminolevulinate from L-glutamyl-tRNA(Glu): step 1/2. Its function is as follows. Catalyzes the NADPH-dependent reduction of glutamyl-tRNA(Glu) to glutamate 1-semialdehyde (GSA). The polypeptide is Glutamyl-tRNA reductase (Enterobacter sp. (strain 638)).